We begin with the raw amino-acid sequence, 195 residues long: Der GTPase-activating protein YihI (195 aa).

Residues 1 to 81 are disordered; sequence MSRTKKTRRI…KAVVKEVKDP (81 aa). Basic and acidic residues-rich tracts occupy residues 9-23, 38-49, and 66-81; these read RITD…DKPK, TRYELDAQAREE, and DPAE…VKDP.

This sequence belongs to the YihI family. As to quaternary structure, interacts with Der.

Its function is as follows. A GTPase-activating protein (GAP) that modifies Der/EngA GTPase function. May play a role in ribosome biogenesis. This chain is Der GTPase-activating protein YihI, found in Mannheimia haemolytica (Pasteurella haemolytica).